The chain runs to 201 residues: DNA polymerase epsilon subunit C (201 aa).

Disordered regions lie at residues 102–165 (KKRE…KSTR) and 178–201 (SALD…STDP). The span at 117 to 144 (VVIEEPELHEDDGVEEEEEEDEVSEEEE) shows a compositional bias: acidic residues. 2 stretches are compositionally biased toward basic and acidic residues: residues 145-164 (PVHN…DKST) and 182-201 (VGEH…STDP). 3 positions are modified to phosphoserine: Ser-186, Ser-188, and Ser-189.

In terms of assembly, DNA polymerase epsilon is a heterotetramer consisting of POL2, DPB2, DPB3 and DPB4.

The protein resides in the nucleus. As accessory component of the DNA polymerase epsilon (DNA polymerase II) participates in chromosomal DNA replication. It is required during synthesis of the leading and lagging DNA strands at the replication fork and binds at/or near replication origins and moves along DNA with the replication fork. It has 3'-5' proofreading exonuclease activity that correct errors arising during DNA replication. It is also involved in DNA synthesis during DNA repair. The polypeptide is DNA polymerase epsilon subunit C (DPB3) (Saccharomyces cerevisiae (strain ATCC 204508 / S288c) (Baker's yeast)).